The following is a 193-amino-acid chain: MRAHLLHCELAFSFGKYFYSTSFLNLLMINLMFSKLGAIFFLNLALYLLALALFFFFLFNVKVALLKSVSQIYYFNNIFFFKFFVLIFFLNLAGIPPLLGFFLKFLIFFFLFFKTNLAFILIFLGFNMATLFFYLSTVKSFVNRKQASVLNSFNFFIRAELSFLYFFNFFYFFLFFAFFFLDSTFLIFLNLFF.

5 helical membrane-spanning segments follow: residues 18-38 (FYST…KLGA), 39-59 (IFFL…FFLF), 83-103 (FFVL…GFFL), 116-138 (NLAF…LSTV), and 161-181 (LSFL…FFFL).

The protein resides in the mitochondrion inner membrane. The enzyme catalyses a ubiquinone + NADH + 5 H(+)(in) = a ubiquinol + NAD(+) + 4 H(+)(out). Its function is as follows. Core subunit of the mitochondrial membrane respiratory chain NADH dehydrogenase (Complex I) that is believed to belong to the minimal assembly required for catalysis. Complex I functions in the transfer of electrons from NADH to the respiratory chain. The immediate electron acceptor for the enzyme is believed to be ubiquinone. The polypeptide is NADH-ubiquinone oxidoreductase chain 2 (ND2) (Paramecium tetraurelia).